The primary structure comprises 87 residues: Candoxin (87 aa).

Positions 1-21 are cleaved as a signal peptide; that stretch reads MKTLLLTLVVVTIVCLDLGYT. Cystine bridges form between Cys24–Cys47, Cys27–Cys32, Cys40–Cys64, Cys68–Cys80, and Cys81–Cys86.

In terms of tissue distribution, expressed by the venom gland.

The protein localises to the secreted. In terms of biological role, binds and inhibits muscular and neuronal nicotinic acetylcholine receptors (nAChR). Is a reversible antagonist of muscle nAChR (alpha-1-beta-1-delta-epsilon/CHRNA1-CHRNB1-CHRND-CHRNE) (IC(50)=10 nM) and a potent and poorly reversible antagonist of the neuronal alpha-7/CHRNA7 nAChR (IC(50)=50 nM). May exhibit differential affinities for the two binding sites on the muscle nAChR. This Bungarus candidus (Malayan krait) protein is Candoxin.